The chain runs to 232 residues: Phosphoglycolate phosphatase (232 aa).

Catalysis depends on Asp-8, which acts as the Nucleophile. Asp-8 and Asp-10 together coordinate Mg(2+). Residue Lys-156 coordinates substrate. Residues Asp-179 and Asp-183 each coordinate Mg(2+).

The protein belongs to the archaeal SPP-like hydrolase family. It depends on Mg(2+) as a cofactor.

The enzyme catalyses 2-phosphoglycolate + H2O = glycolate + phosphate. Functionally, catalyzes the dephosphorylation of 2-phosphoglycolate. This Methanopyrus kandleri (strain AV19 / DSM 6324 / JCM 9639 / NBRC 100938) protein is Phosphoglycolate phosphatase.